Consider the following 55-residue polypeptide: uncharacterized protein (55 aa).

A disordered region spans residues 1-30 (MDKPTVETSAAPVETLVLTEPPAETQAEDS).

This is an uncharacterized protein from Frog virus 3 (isolate Goorha) (FV-3).